We begin with the raw amino-acid sequence, 1024 residues long: Isoleucine--tRNA ligase (1024 aa).

Residues 52–62 (PTANGRPHVGH) carry the 'HIGH' region motif. Positions 590 to 594 (KMSKS) match the 'KMSKS' region motif. Lys-593 serves as a coordination point for ATP.

The protein belongs to the class-I aminoacyl-tRNA synthetase family. IleS type 2 subfamily. In terms of assembly, monomer. The cofactor is Zn(2+).

The protein resides in the cytoplasm. The catalysed reaction is tRNA(Ile) + L-isoleucine + ATP = L-isoleucyl-tRNA(Ile) + AMP + diphosphate. In terms of biological role, catalyzes the attachment of isoleucine to tRNA(Ile). As IleRS can inadvertently accommodate and process structurally similar amino acids such as valine, to avoid such errors it has two additional distinct tRNA(Ile)-dependent editing activities. One activity is designated as 'pretransfer' editing and involves the hydrolysis of activated Val-AMP. The other activity is designated 'posttransfer' editing and involves deacylation of mischarged Val-tRNA(Ile). The protein is Isoleucine--tRNA ligase of Picrophilus torridus (strain ATCC 700027 / DSM 9790 / JCM 10055 / NBRC 100828 / KAW 2/3).